Reading from the N-terminus, the 873-residue chain is DNA mismatch repair protein MutS (873 aa).

620 to 627 (GPNMAGKS) is an ATP binding site.

Belongs to the DNA mismatch repair MutS family.

This protein is involved in the repair of mismatches in DNA. It is possible that it carries out the mismatch recognition step. This protein has a weak ATPase activity. The sequence is that of DNA mismatch repair protein MutS from Ruminiclostridium cellulolyticum (strain ATCC 35319 / DSM 5812 / JCM 6584 / H10) (Clostridium cellulolyticum).